Here is a 376-residue protein sequence, read N- to C-terminus: Chaperone protein DnaJ (376 aa).

Positions 5–70 constitute a J domain; that stretch reads DYYEVLGVAR…NKRRAYDAHG (66 aa). Residues 132 to 209 form a CR-type zinc finger; it reads GIERRIEIPT…CHGAGRVEED (78 aa). 8 residues coordinate Zn(2+): Cys-145, Cys-148, Cys-161, Cys-164, Cys-183, Cys-186, Cys-197, and Cys-200. 4 CXXCXGXG motif repeats span residues 145–152, 161–168, 183–190, and 197–204; these read CEPCHGSG, CATCHGRG, CPHCDGRG, and CKTCHGAG.

It belongs to the DnaJ family. In terms of assembly, homodimer. It depends on Zn(2+) as a cofactor.

The protein localises to the cytoplasm. Functionally, participates actively in the response to hyperosmotic and heat shock by preventing the aggregation of stress-denatured proteins and by disaggregating proteins, also in an autonomous, DnaK-independent fashion. Unfolded proteins bind initially to DnaJ; upon interaction with the DnaJ-bound protein, DnaK hydrolyzes its bound ATP, resulting in the formation of a stable complex. GrpE releases ADP from DnaK; ATP binding to DnaK triggers the release of the substrate protein, thus completing the reaction cycle. Several rounds of ATP-dependent interactions between DnaJ, DnaK and GrpE are required for fully efficient folding. Also involved, together with DnaK and GrpE, in the DNA replication of plasmids through activation of initiation proteins. This chain is Chaperone protein DnaJ, found in Xanthomonas campestris pv. campestris (strain 8004).